The primary structure comprises 692 residues: Elongation factor G (692 aa).

Positions Lys-8–Leu-282 constitute a tr-type G domain. GTP contacts are provided by residues Ala-17–Thr-24, Asp-81–His-85, and Asn-135–Asp-138.

It belongs to the TRAFAC class translation factor GTPase superfamily. Classic translation factor GTPase family. EF-G/EF-2 subfamily.

It localises to the cytoplasm. Its function is as follows. Catalyzes the GTP-dependent ribosomal translocation step during translation elongation. During this step, the ribosome changes from the pre-translocational (PRE) to the post-translocational (POST) state as the newly formed A-site-bound peptidyl-tRNA and P-site-bound deacylated tRNA move to the P and E sites, respectively. Catalyzes the coordinated movement of the two tRNA molecules, the mRNA and conformational changes in the ribosome. The chain is Elongation factor G (fusA) from Mycoplasmopsis pulmonis (strain UAB CTIP) (Mycoplasma pulmonis).